The following is a 483-amino-acid chain: ATP synthase subunit beta, chloroplastic (483 aa).

Residue 163–170 (GGAGVGKT) coordinates ATP.

This sequence belongs to the ATPase alpha/beta chains family. In terms of assembly, F-type ATPases have 2 components, CF(1) - the catalytic core - and CF(0) - the membrane proton channel. CF(1) has five subunits: alpha(3), beta(3), gamma(1), delta(1), epsilon(1). CF(0) has four main subunits: a(1), b(1), b'(1) and c(9-12).

It localises to the plastid. It is found in the chloroplast thylakoid membrane. The enzyme catalyses ATP + H2O + 4 H(+)(in) = ADP + phosphate + 5 H(+)(out). Produces ATP from ADP in the presence of a proton gradient across the membrane. The catalytic sites are hosted primarily by the beta subunits. The chain is ATP synthase subunit beta, chloroplastic from Ostreococcus tauri.